A 403-amino-acid polypeptide reads, in one-letter code: Ribosomal RNA large subunit methyltransferase I (403 aa).

The 80-residue stretch at 9 to 88 folds into the PUA domain; it reads YPRLVLSKGR…ESIDIAFFTR (80 aa).

Belongs to the methyltransferase superfamily. RlmI family.

It is found in the cytoplasm. The catalysed reaction is cytidine(1962) in 23S rRNA + S-adenosyl-L-methionine = 5-methylcytidine(1962) in 23S rRNA + S-adenosyl-L-homocysteine + H(+). Its function is as follows. Specifically methylates the cytosine at position 1962 (m5C1962) of 23S rRNA. The protein is Ribosomal RNA large subunit methyltransferase I of Salmonella schwarzengrund (strain CVM19633).